Reading from the N-terminus, the 442-residue chain is Putative mannan endo-1,6-alpha-mannosidase C1198.07c (442 aa).

The signal sequence occupies residues Met1–Ala19. Over Phe20–Trp421 the chain is Lumenal. Asn75, Asn124, Asn193, Asn229, Asn254, Asn257, and Asn356 each carry an N-linked (GlcNAc...) asparagine glycan. The chain crosses the membrane as a helical span at residues Ala422 to Phe442.

The protein belongs to the glycosyl hydrolase 76 family.

It localises to the endoplasmic reticulum membrane. It carries out the reaction Random hydrolysis of (1-&gt;6)-alpha-D-mannosidic linkages in unbranched (1-&gt;6)-mannans.. The polypeptide is Putative mannan endo-1,6-alpha-mannosidase C1198.07c (Schizosaccharomyces pombe (strain 972 / ATCC 24843) (Fission yeast)).